The chain runs to 120 residues: uncharacterized protein (120 aa).

It is found in the mitochondrion. This is an uncharacterized protein from Arabidopsis thaliana (Mouse-ear cress).